A 511-amino-acid polypeptide reads, in one-letter code: Probable G-protein coupled receptor 152 (511 aa).

The disordered stretch occupies residues M1–L20. The Extracellular portion of the chain corresponds to M1–T33. The chain crosses the membrane as a helical span at residues V34–A54. At G55–R65 the chain is on the cytoplasmic side. A helical membrane pass occupies residues L66–F86. At Q87–R105 the chain is on the extracellular side. Cysteines 104 and 182 form a disulfide. Residues F106–S126 form a helical membrane-spanning segment. The Cytoplasmic segment spans residues L127–P148. A helical membrane pass occupies residues L149–F169. The Extracellular segment spans residues P170–R194. Residues M195 to T215 form a helical membrane-spanning segment. Over Q216–Q258 the chain is Cytoplasmic. The helical transmembrane segment at L259 to V279 threads the bilayer. The Extracellular portion of the chain corresponds to Y280–D282. The chain crosses the membrane as a helical span at residues Y283–L303. Residues R304–T511 lie on the Cytoplasmic side of the membrane. Disordered stretches follow at residues P328–V349, S361–G386, and P407–T511. Polar residues-rich tracts occupy residues P335–L345 and V369–G386. A compositionally biased stretch (low complexity) spans P419 to V433. 2 stretches are compositionally biased toward polar residues: residues P435 to T453 and S462 to G473.

The protein belongs to the G-protein coupled receptor 1 family.

It localises to the cell membrane. In terms of biological role, orphan receptor. This Mus musculus (Mouse) protein is Probable G-protein coupled receptor 152 (Gpr152).